The sequence spans 456 residues: 1,3-beta-glucanosyltransferase gas4 (456 aa).

An N-terminal signal peptide occupies residues 1-25 (MGVANIIYALFLLGPSIFLKATAQT). Cys-68 and Cys-97 are joined by a disulfide. (1,3-beta-D-glucosyl)n contacts are provided by Tyr-86, Asn-156, Glu-157, Asp-197, and Arg-202. Glu-157 serves as the catalytic Proton donor. 2 disulfide bridges follow: Cys-211/Cys-350 and Cys-229/Cys-260. N-linked (GlcNAc...) asparagine glycosylation occurs at Asn-248. Catalysis depends on Glu-257, which acts as the Nucleophile. Tyr-296 lines the (1,3-beta-D-glucosyl)n pocket. Disordered stretches follow at residues 334–353 (NPKG…CPAN) and 384–434 (IEGP…ESGS). N-linked (GlcNAc...) asparagine glycosylation is found at Asn-353 and Asn-415. Residues 417-434 (TSTTSYTSGMTSSSESGS) show a composition bias toward low complexity. The GPI-anchor amidated serine moiety is linked to residue Ser-432. Residues 433–456 (GSSKIGVAFCQALFITVLIATLSF) constitute a propeptide, removed in mature form.

The protein belongs to the glycosyl hydrolase 72 family.

The protein resides in the cell membrane. Splits internally a 1,3-beta-glucan molecule and transfers the newly generated reducing end (the donor) to the non-reducing end of another 1,3-beta-glucan molecule (the acceptor) forming a 1,3-beta linkage, resulting in the elongation of 1,3-beta-glucan chains in the cell wall. Involved in spore wall assembly. The chain is 1,3-beta-glucanosyltransferase gas4 (gas4) from Schizosaccharomyces pombe (strain 972 / ATCC 24843) (Fission yeast).